The chain runs to 294 residues: Acetyl-coenzyme A carboxylase carboxyl transferase subunit beta (294 aa).

Positions 25–294 (IWTKCDNCGQ…PKVDYRHCVE (270 aa)) constitute a CoA carboxyltransferase N-terminal domain. 4 residues coordinate Zn(2+): C29, C32, C48, and C51. The segment at 29 to 51 (CDNCGQLLYKKELERNLEVCPKC) adopts a C4-type zinc-finger fold.

This sequence belongs to the AccD/PCCB family. Acetyl-CoA carboxylase is a heterohexamer composed of biotin carboxyl carrier protein (AccB), biotin carboxylase (AccC) and two subunits each of ACCase subunit alpha (AccA) and ACCase subunit beta (AccD). The cofactor is Zn(2+).

The protein resides in the cytoplasm. It carries out the reaction N(6)-carboxybiotinyl-L-lysyl-[protein] + acetyl-CoA = N(6)-biotinyl-L-lysyl-[protein] + malonyl-CoA. It participates in lipid metabolism; malonyl-CoA biosynthesis; malonyl-CoA from acetyl-CoA: step 1/1. In terms of biological role, component of the acetyl coenzyme A carboxylase (ACC) complex. Biotin carboxylase (BC) catalyzes the carboxylation of biotin on its carrier protein (BCCP) and then the CO(2) group is transferred by the transcarboxylase to acetyl-CoA to form malonyl-CoA. This chain is Acetyl-coenzyme A carboxylase carboxyl transferase subunit beta, found in Blochmanniella pennsylvanica (strain BPEN).